A 505-amino-acid chain; its full sequence is Glycerol kinase (505 aa).

T14 contributes to the ADP binding site. ATP is bound by residues T14, T15, and S16. T14 provides a ligand contact to sn-glycerol 3-phosphate. Position 18 (R18) interacts with ADP. R84, E85, Y136, and D246 together coordinate sn-glycerol 3-phosphate. R84, E85, Y136, D246, and Q247 together coordinate glycerol. Residues T268 and G311 each contribute to the ADP site. Residues T268, G311, Q315, and G412 each coordinate ATP. ADP-binding residues include G412 and N416.

This sequence belongs to the FGGY kinase family.

The catalysed reaction is glycerol + ATP = sn-glycerol 3-phosphate + ADP + H(+). Its pathway is polyol metabolism; glycerol degradation via glycerol kinase pathway; sn-glycerol 3-phosphate from glycerol: step 1/1. With respect to regulation, inhibited by fructose 1,6-bisphosphate (FBP). Its function is as follows. Key enzyme in the regulation of glycerol uptake and metabolism. Catalyzes the phosphorylation of glycerol to yield sn-glycerol 3-phosphate. The protein is Glycerol kinase of Vibrio campbellii (strain ATCC BAA-1116).